A 404-amino-acid chain; its full sequence is p-hydroxybenzoate hydroxylase (404 aa).

Residues glutamate 35, 45–50 (RIRAGI), and glutamine 105 contribute to the FAD site. Residues tyrosine 203, 214–216 (SMR), and tyrosine 224 contribute to the substrate site. Aspartate 288 lines the FAD pocket. Proline 295 contributes to the substrate binding site. 301 to 302 (LN) is an FAD binding site.

Belongs to the aromatic-ring hydroxylase family. In terms of assembly, homodimer. The cofactor is FAD.

The catalysed reaction is 4-hydroxybenzoate + NADPH + O2 + H(+) = 3,4-dihydroxybenzoate + NADP(+) + H2O. The protein operates within aromatic compound metabolism; benzoate degradation via hydroxylation; 3,4-dihydroxybenzoate from benzoate: step 2/2. In terms of biological role, catalyzes the incorporation of an atom of dioxygen into p-hydroxybenzoate (p-OHB) to form 3,4-dihydroxybenzoate (3,4DOHB). The reaction occurs in two parts: reduction of the flavin adenine dinucleotide (FAD) in the enzyme by reduced nicotinamide adenine dinucleotide phosphate (NADPH) in response to binding p-hydroxybenzoate to the enzyme and oxidation of reduced FAD with oxygen to form a hydroperoxide, which then oxygenates p-hydroxybenzoate. This Acinetobacter baylyi (strain ATCC 33305 / BD413 / ADP1) protein is p-hydroxybenzoate hydroxylase (pobA).